The following is a 511-amino-acid chain: Chromosomal replication initiator protein DnaA (511 aa).

A domain I, interacts with DnaA modulators region spans residues 1-90; sequence MSVELWQQCV…KRSSAPRAAP (90 aa). The tract at residues 91–174 is domain II; it reads NAPLAAAASQ…QVEGALKHTS (84 aa). A disordered region spans residues 133–162; it reads VAAHDEPSRDSFDPMAGASSQQAPARAEQR. The span at 135-144 shows a compositional bias: basic and acidic residues; the sequence is AHDEPSRDSF. The tract at residues 175 to 391 is domain III, AAA+ region; sequence YLNRTFTFEN…GALKRVIAHS (217 aa). The ATP site is built by glycine 219, glycine 221, lysine 222, and threonine 223. The interval 392–511 is domain IV, binds dsDNA; sequence HFMGRDITIE…YKNLLRTLTT (120 aa).

Belongs to the DnaA family. As to quaternary structure, oligomerizes as a right-handed, spiral filament on DNA at oriC.

The protein resides in the cytoplasm. Functionally, plays an essential role in the initiation and regulation of chromosomal replication. ATP-DnaA binds to the origin of replication (oriC) to initiate formation of the DNA replication initiation complex once per cell cycle. Binds the DnaA box (a 9 base pair repeat at the origin) and separates the double-stranded (ds)DNA. Forms a right-handed helical filament on oriC DNA; dsDNA binds to the exterior of the filament while single-stranded (ss)DNA is stabiized in the filament's interior. The ATP-DnaA-oriC complex binds and stabilizes one strand of the AT-rich DNA unwinding element (DUE), permitting loading of DNA polymerase. After initiation quickly degrades to an ADP-DnaA complex that is not apt for DNA replication. Binds acidic phospholipids. The chain is Chromosomal replication initiator protein DnaA from Pseudomonas savastanoi pv. phaseolicola (strain 1448A / Race 6) (Pseudomonas syringae pv. phaseolicola (strain 1448A / Race 6)).